Here is a 129-residue protein sequence, read N- to C-terminus: uncharacterized protein (129 aa).

Residues Y8 to I24 traverse the membrane as a helical segment.

Its subcellular location is the membrane. This is an uncharacterized protein from Rickettsia prowazekii (strain Madrid E).